The sequence spans 203 residues: NAD(P)H dehydrogenase (quinone) (203 aa).

Residues 3-194 (VLIVYYSLYG…DAARFQGRHI (192 aa)) form the Flavodoxin-like domain. FMN contacts are provided by residues 9 to 14 (SLYGHV) and 82 to 84 (TRF). Tyr-11 is an NAD(+) binding site. Residue Trp-102 participates in substrate binding. FMN-binding positions include 117–123 (STATQHG) and His-138.

Belongs to the WrbA family. The cofactor is FMN.

The enzyme catalyses a quinone + NADH + H(+) = a quinol + NAD(+). It catalyses the reaction a quinone + NADPH + H(+) = a quinol + NADP(+). The chain is NAD(P)H dehydrogenase (quinone) from Solidesulfovibrio magneticus (strain ATCC 700980 / DSM 13731 / RS-1) (Desulfovibrio magneticus).